Reading from the N-terminus, the 209-residue chain is Small ribosomal subunit protein uS4 (209 aa).

The disordered stretch occupies residues Ser-23–Asp-46. The S4 RNA-binding domain occupies Cys-93 to Leu-156.

The protein belongs to the universal ribosomal protein uS4 family. As to quaternary structure, part of the 30S ribosomal subunit. Contacts protein S5. The interaction surface between S4 and S5 is involved in control of translational fidelity.

In terms of biological role, one of the primary rRNA binding proteins, it binds directly to 16S rRNA where it nucleates assembly of the body of the 30S subunit. Its function is as follows. With S5 and S12 plays an important role in translational accuracy. The sequence is that of Small ribosomal subunit protein uS4 from Chlamydia caviae (strain ATCC VR-813 / DSM 19441 / 03DC25 / GPIC) (Chlamydophila caviae).